The sequence spans 364 residues: Putative glutamate--cysteine ligase 2-2 (364 aa).

This sequence belongs to the glutamate--cysteine ligase type 2 family. YbdK subfamily.

The enzyme catalyses L-cysteine + L-glutamate + ATP = gamma-L-glutamyl-L-cysteine + ADP + phosphate + H(+). ATP-dependent carboxylate-amine ligase which exhibits weak glutamate--cysteine ligase activity. The protein is Putative glutamate--cysteine ligase 2-2 of Mycobacterium sp. (strain JLS).